We begin with the raw amino-acid sequence, 418 residues long: Creatine kinase U-type, mitochondrial (418 aa).

The transit peptide at 1–39 directs the protein to the mitochondrion; sequence MAGPFSRLLSARPGLRLLALAGAGSLTAGILLRPESVGA. Residues 40–64 are cardiolipin-binding; that stretch reads AAAERRRLYPPSAEYPDLRKHNNCM. The 87-residue stretch at 46 to 132 folds into the Phosphagen kinase N-terminal domain; it reads RLYPPSAEYP…FDPVIQERHN (87 aa). Serine 152 carries the post-translational modification Phosphoserine. Positions 159–401 constitute a Phosphagen kinase C-terminal domain; that stretch reads YVLSSRVRTG…NYLIDCERRL (243 aa). An ATP-binding site is contributed by 162–166; that stretch reads SSRVR. A Phosphoserine modification is found at serine 197. Threonine 214 carries the post-translational modification Phosphothreonine. An ATP-binding site is contributed by histidine 225. Serine 233 is modified (phosphoserine). ATP contacts are provided by residues arginine 270, arginine 326, and 354–359; that span reads RGTGGV. Threonine 356 carries the phosphothreonine modification. The residue at position 366 (serine 366) is a Phosphoserine. Aspartate 369 lines the ATP pocket.

Belongs to the ATP:guanido phosphotransferase family. In terms of assembly, exists as an octamer composed of four MTCK homodimers.

Its subcellular location is the mitochondrion inner membrane. It catalyses the reaction creatine + ATP = N-phosphocreatine + ADP + H(+). Reversibly catalyzes the transfer of phosphate between ATP and various phosphogens (e.g. creatine phosphate). Creatine kinase isoenzymes play a central role in energy transduction in tissues with large, fluctuating energy demands, such as skeletal muscle, heart, brain and spermatozoa. The sequence is that of Creatine kinase U-type, mitochondrial (Ckmt1) from Mus musculus (Mouse).